Consider the following 707-residue polypeptide: Anti-sigma-I factor RsgI9 (707 aa).

Topologically, residues 1–149 are cytoplasmic; that stretch reads MKITGVIVRI…NFSRISNIKN (149 aa). A RsgI N-terminal anti-sigma domain is found at 3 to 50; that stretch reads ITGVIVRIHKDRAIIRTDDNRLLAVKRHNDMMVGQIVSFDANEVHKVE. Residues 150-172 traverse the membrane as a helical segment; it reads FSRIASIAAAFVLIFLFGRNVML. At 173 to 707 the chain is on the extracellular side; it reads NNSSDSEYAY…DSEEKKEYIQ (535 aa). Positions 256–283 form a coiled coil; the sequence is NDKNKKTRDKREEKIDELKETIEQGIEA. A disordered region spans residues 345 to 392; the sequence is EDNTELAPTPTPVPPETPEPTPTPTASEATPSNSPVESKSPEAVPELG. Over residues 353–367 the composition is skewed to pro residues; the sequence is TPTPVPPETPEPTPT. The segment covering 368 to 379 has biased composition (low complexity); that stretch reads PTASEATPSNSP.

It is found in the cell membrane. The sequence is that of Anti-sigma-I factor RsgI9 from Acetivibrio thermocellus (strain ATCC 27405 / DSM 1237 / JCM 9322 / NBRC 103400 / NCIMB 10682 / NRRL B-4536 / VPI 7372) (Clostridium thermocellum).